The primary structure comprises 182 residues: tRNA-splicing endonuclease (182 aa).

Catalysis depends on residues Y119, H127, and K158.

Belongs to the tRNA-intron endonuclease family. Archaeal short subfamily. Homotetramer; although the tetramer contains four active sites, only two participate in the cleavage. Therefore, it should be considered as a dimer of dimers.

The enzyme catalyses pretRNA = a 3'-half-tRNA molecule with a 5'-OH end + a 5'-half-tRNA molecule with a 2',3'-cyclic phosphate end + an intron with a 2',3'-cyclic phosphate and a 5'-hydroxyl terminus.. In terms of biological role, endonuclease that removes tRNA introns. Cleaves pre-tRNA at the 5'- and 3'-splice sites to release the intron. The products are an intron and two tRNA half-molecules bearing 2',3' cyclic phosphate and 5'-OH termini. Recognizes a pseudosymmetric substrate in which 2 bulged loops of 3 bases are separated by a stem of 4 bp. In Saccharolobus solfataricus (strain ATCC 35092 / DSM 1617 / JCM 11322 / P2) (Sulfolobus solfataricus), this protein is tRNA-splicing endonuclease.